Here is a 464-residue protein sequence, read N- to C-terminus: Na(+)/H(+) antiporter NhaA 2 (464 aa).

Helical transmembrane passes span 53–73 (VGGI…NSPW), 96–116 (LTLG…VVGL), 134–154 (ALPI…FVLV), 165–185 (GWAI…AVIS), 195–215 (FLLT…AVFY), 219–239 (IKAW…VCAQ), 257–277 (VLVH…GFAV), 313–333 (IAIP…LSGL), 340–360 (PITL…ILVT), 378–398 (WVDV…SLLI), and 412–432 (FVKI…AIVL).

This sequence belongs to the NhaA Na(+)/H(+) (TC 2.A.33) antiporter family.

It localises to the cell membrane. The catalysed reaction is Na(+)(in) + 2 H(+)(out) = Na(+)(out) + 2 H(+)(in). Functionally, na(+)/H(+) antiporter that extrudes sodium in exchange for external protons. This is Na(+)/H(+) antiporter NhaA 2 from Mycolicibacterium vanbaalenii (strain DSM 7251 / JCM 13017 / BCRC 16820 / KCTC 9966 / NRRL B-24157 / PYR-1) (Mycobacterium vanbaalenii).